The sequence spans 209 residues: Claudin-4 (209 aa).

At 1 to 7 (MASMGLQ) the chain is on the cytoplasmic side. The interaction with EPHA2 stretch occupies residues 1-103 (MASMGLQVMG…GVLLSVVGGK (103 aa)). The chain crosses the membrane as a helical span at residues 8-28 (VMGIALAVLGWLAVMLCCALP). Residues 29-81 (MWRVTAFIGSNIVTSQTIWEGLWMNCVVQSTGQMQCKVYDSLLALPQDLQAAR) lie on the Extracellular side of the membrane. The cysteines at positions 54 and 64 are disulfide-linked. Residues 82–102 (ALVIISIIVAALGVLLSVVGG) traverse the membrane as a helical segment. The Cytoplasmic portion of the chain corresponds to 103-117 (KCTNCLEDESAKAKT). Residues 118–138 (MIVAGVVFLLAGLMVIVPVSW) form a helical membrane-spanning segment. Residues 139–160 (TAHNIIQDFYNPLVASGQKREM) lie on the Extracellular side of the membrane. The chain crosses the membrane as a helical span at residues 161–181 (GASLYVGWAASGLLLLGGGLL). Residues 182 to 209 (CCNCPPRTDKPYSAKYSAARSAAASNYV) are Cytoplasmic-facing. Tyrosine 208 carries the post-translational modification Phosphotyrosine; by EPHA2. Residues 208–209 (YV) are interactions with TJP1, TJP2 and TJP3.

Belongs to the claudin family. Can form heteropolymeric strands with other claudins. Interacts with CLDN8. Interacts with CLDN1. Directly interacts with TJP1/ZO-1. Interacts with TJP2/ZO-2 and TJP3/ZO-3. Interacts with EPHA2; phosphorylates CLDN4 and may regulate tight junctions. As to quaternary structure, (Microbial infection) Interacts (via both extracellular domains) with Clostridium perfringens enterotoxin CPE; the interaction may disrupt claudin assembly in tight junctions. In terms of processing, phosphorylated. Phosphorylation by EPHA2 is stimulated by EFNA1 and alters interaction with TJP1.

The protein localises to the cell junction. Its subcellular location is the tight junction. It localises to the cell membrane. The catalysed reaction is chloride(in) = chloride(out). It carries out the reaction bromide(in) = bromide(out). The enzyme catalyses iodide(out) = iodide(in). It catalyses the reaction fluoride(in) = fluoride(out). Functionally, can associate with other claudins to regulate tight junction structural and functional strand dynamics. May coassemble with CLDN8 into tight junction strands containing anion-selective channels that convey paracellular chloride permeability in renal collecting ducts. May integrate into CLDN3 strands to modulate localized tight junction barrier properties. May disrupt strand assembly of channel-forming CLDN2 and CLDN15 and inhibit cation conductance. Cannot form tight junction strands on its own. The chain is Claudin-4 from Homo sapiens (Human).